The following is a 162-amino-acid chain: Crossover junction endodeoxyribonuclease RuvC (162 aa).

Residues aspartate 8, glutamate 69, and histidine 141 contribute to the active site. Residues aspartate 8, glutamate 69, and histidine 141 each coordinate Mg(2+).

It belongs to the RuvC family. In terms of assembly, homodimer which binds Holliday junction (HJ) DNA. The HJ becomes 2-fold symmetrical on binding to RuvC with unstacked arms; it has a different conformation from HJ DNA in complex with RuvA. In the full resolvosome a probable DNA-RuvA(4)-RuvB(12)-RuvC(2) complex forms which resolves the HJ. Mg(2+) serves as cofactor.

The protein localises to the cytoplasm. The catalysed reaction is Endonucleolytic cleavage at a junction such as a reciprocal single-stranded crossover between two homologous DNA duplexes (Holliday junction).. The RuvA-RuvB-RuvC complex processes Holliday junction (HJ) DNA during genetic recombination and DNA repair. Endonuclease that resolves HJ intermediates. Cleaves cruciform DNA by making single-stranded nicks across the HJ at symmetrical positions within the homologous arms, yielding a 5'-phosphate and a 3'-hydroxyl group; requires a central core of homology in the junction. The consensus cleavage sequence is 5'-(A/T)TT(C/G)-3'. Cleavage occurs on the 3'-side of the TT dinucleotide at the point of strand exchange. HJ branch migration catalyzed by RuvA-RuvB allows RuvC to scan DNA until it finds its consensus sequence, where it cleaves and resolves the cruciform DNA. The chain is Crossover junction endodeoxyribonuclease RuvC from Wolbachia pipientis wMel.